A 377-amino-acid chain; its full sequence is Dihydroorotate dehydrogenase (quinone) (377 aa).

FMN is bound by residues 78-82 and Ala102; that span reads AGCDK. Lys82 contacts substrate. Residue 127-130 participates in substrate binding; that stretch reads NRLG. 2 residues coordinate FMN: Asn159 and Asn192. Asn192 contributes to the substrate binding site. Catalysis depends on Ser195, which acts as the Nucleophile. Asn197 contributes to the substrate binding site. FMN contacts are provided by Lys230 and Thr258. 259–260 provides a ligand contact to substrate; sequence NT. FMN contacts are provided by residues Gly288, Gly317, and 338–339; that span reads YT.

Belongs to the dihydroorotate dehydrogenase family. Type 2 subfamily. As to quaternary structure, monomer. FMN is required as a cofactor.

The protein resides in the cell membrane. It carries out the reaction (S)-dihydroorotate + a quinone = orotate + a quinol. Its pathway is pyrimidine metabolism; UMP biosynthesis via de novo pathway; orotate from (S)-dihydroorotate (quinone route): step 1/1. Its function is as follows. Catalyzes the conversion of dihydroorotate to orotate with quinone as electron acceptor. This Rippkaea orientalis (strain PCC 8801 / RF-1) (Cyanothece sp. (strain PCC 8801)) protein is Dihydroorotate dehydrogenase (quinone).